The sequence spans 236 residues: 1-(5-phosphoribosyl)-5-[(5-phosphoribosylamino)methylideneamino] imidazole-4-carboxamide isomerase (236 aa).

Asp-8 acts as the Proton acceptor in catalysis. The active-site Proton donor is the Asp-127.

Belongs to the HisA/HisF family.

The protein localises to the cytoplasm. It catalyses the reaction 1-(5-phospho-beta-D-ribosyl)-5-[(5-phospho-beta-D-ribosylamino)methylideneamino]imidazole-4-carboxamide = 5-[(5-phospho-1-deoxy-D-ribulos-1-ylimino)methylamino]-1-(5-phospho-beta-D-ribosyl)imidazole-4-carboxamide. The protein operates within amino-acid biosynthesis; L-histidine biosynthesis; L-histidine from 5-phospho-alpha-D-ribose 1-diphosphate: step 4/9. This Campylobacter hominis (strain ATCC BAA-381 / DSM 21671 / CCUG 45161 / LMG 19568 / NCTC 13146 / CH001A) protein is 1-(5-phosphoribosyl)-5-[(5-phosphoribosylamino)methylideneamino] imidazole-4-carboxamide isomerase.